Here is a 526-residue protein sequence, read N- to C-terminus: MVAYRLLALISLGLGSHCASALQYGYNQLSTHKDSAVVAGAFPAINGTHLQSPAFTSPGTVPRGFSDGTSGPTRDETMEGFMRRLARSNSWMAYHEADFKSEEGRKFPYMYLSASNSSVENPSSHKLRVWLQGGVHGNEPAGDQSMLALLGDLAANQKWAAKLLEKMDILVLPRYNPDGVFYFQRYLATNFDPNRDHVKLARQQTRDIKELFTRFSPHIATDMHEFTAGRTFGPKKDIIYAADALFSAAKNLNIDEGIRQLSEKLFAKRMGKDIEAAGLRWDPYITQGESSSSKLLLLEAGTDAKIGRNAMGLSQCVVFLCETRGIGIADQHFERRTLSGLVMAKSILQTAVDNFDEVYNTIERGIRRFTNSRNDIVLTDKSPIMERTFGMLNITDASLFDYPIDFATTTPAEAVLTRSRPRAYLIPPSWPDIVKRLEVFGVKADKLPYSYVGPVEALNVTSVTFDKEYYEGVVTTTVQTKLVERNIRLPAGSYLVKTNQKNAALAFVALEVRTKDLLPVLIMDVY.

Positions 1-21 (MVAYRLLALISLGLGSHCASA) are cleaved as a signal peptide. An N-linked (GlcNAc...) asparagine glycan is attached at N46. Residues 53-76 (PAFTSPGTVPRGFSDGTSGPTRDE) are disordered. In terms of domain architecture, Peptidase M14 spans 71–351 (GPTRDETMEG…VMAKSILQTA (281 aa)). N116 carries an N-linked (GlcNAc...) asparagine glycan. 3 residues coordinate Zn(2+): H136, E139, and H224. Catalysis depends on E322, which acts as the Proton donor/acceptor. N393 and N459 each carry an N-linked (GlcNAc...) asparagine glycan.

The protein belongs to the peptidase M14 family. Zn(2+) serves as cofactor.

Its subcellular location is the secreted. Its function is as follows. Extracellular metalloprotease that contributes to pathogenicity. The polypeptide is Probable carboxypeptidase 2 (MCPB) (Arthroderma benhamiae (strain ATCC MYA-4681 / CBS 112371) (Trichophyton mentagrophytes)).